We begin with the raw amino-acid sequence, 250 residues long: Ribosomal RNA-processing protein 15 (250 aa).

The span at 1 to 27 (MGSKHRVDTKDKKRTRKNAEFGREKRN) shows a compositional bias: basic and acidic residues. Residues 1–101 (MGSKHRVDTK…NSKHDDGSTG (101 aa)) are disordered. 2 stretches are compositionally biased toward acidic residues: residues 43-53 (MEGDEAEEDEQ) and 67-83 (EQSDAEEDDDEEEEDDD). Ser-69 carries the post-translational modification Phosphoserine.

It belongs to the RRP15 family.

It is found in the nucleus. It localises to the nucleolus. Its function is as follows. Constituent of pre-60S ribosomal particles. Required for large subunit rRNA maturation, in particular processing of the 27S pre-rRNA at the A3 and B1 sites to yield 5.8S and 25S rRNA. In Saccharomyces cerevisiae (strain ATCC 204508 / S288c) (Baker's yeast), this protein is Ribosomal RNA-processing protein 15.